Here is a 347-residue protein sequence, read N- to C-terminus: 4-hydroxy-2-oxovalerate aldolase (347 aa).

The Pyruvate carboxyltransferase domain occupies 11–262 (PVVVDTTLRD…NPGLDVFKLL (252 aa)). 19-20 (RD) contacts substrate. Asp-20 contacts Mn(2+). The Proton acceptor role is filled by His-23. The substrate site is built by Ser-173 and His-201. Residues His-201 and His-203 each coordinate Mn(2+). Residue Tyr-292 participates in substrate binding.

The protein belongs to the 4-hydroxy-2-oxovalerate aldolase family. Homodimer. Can also form a heterotetramer composed of two aldolase (TTHB246) and two dehydrogenase (TTHB247) subunits. Upon complex formation, the aldolase shows a 5-fold increase in substrate affinity, while the dehydrogenase shows a 3-fold decrease; the kcat values of each enzyme are reduced by 2-fold when they are in a complex. Requires Co(2+) as cofactor. The cofactor is Ni(2+). Mn(2+) serves as cofactor.

The enzyme catalyses (S)-4-hydroxy-2-oxopentanoate = acetaldehyde + pyruvate. It catalyses the reaction (S)-4-hydroxy-2-oxohexanoate = propanal + pyruvate. Its activity is regulated as follows. Appears to be allosterically activated by NADH. Functionally, catalyzes the retro-aldol cleavage of both 4-hydroxy-2-oxopentanoate (HOPA) and 4-hydroxy-2-oxohexanoate (HOHA) to pyruvate and acetaldehyde or propanaldehyde, respectively. The aldehydes produced by this reaction are directly channeled to the dehydrogenase TTHB247, ensuring that these toxic aldehydes are sequestered from cellular components. Is involved in the meta-cleavage pathway for the degradation of aromatic compounds. Appears to be stereospecific since it can cleave (4S)-4-hydroxy-2-oxopentanoate but not the (4R) isomer. Is not able to catalyze the aldol addition of 2-oxobutyrate with acetaldehyde; this indicates that the enzyme is specific for pyruvate as the carbonyl donor. The sequence is that of 4-hydroxy-2-oxovalerate aldolase from Thermus thermophilus (strain ATCC 27634 / DSM 579 / HB8).